The primary structure comprises 36 residues: MIDLNFPSIFVPLVGLVFPAIAMASLSLYVQRNKIV.

Residues 9-29 form a helical membrane-spanning segment; the sequence is IFVPLVGLVFPAIAMASLSLY.

It belongs to the PsaI family.

It localises to the plastid. Its subcellular location is the chloroplast thylakoid membrane. May help in the organization of the PsaL subunit. In Phalaenopsis aphrodite subsp. formosana (Moth orchid), this protein is Photosystem I reaction center subunit VIII.